The primary structure comprises 154 residues: Pseudo histidine-containing phosphotransfer protein 6 (154 aa).

Met1 bears the N-acetylmethionine mark. One can recognise an HPt domain in the interval 41-137; sequence SPNFVYDVIN…HYLKNMMHEL (97 aa).

In terms of assembly, interacts with AHK5.

The protein resides in the cytoplasm. It is found in the cytosol. It localises to the nucleus. In terms of biological role, functions as a two-component phosphorelay mediator between cytokinin sensor histidine kinases and response regulators (B-type ARRs). Plays an important role in propagating cytokinin signal transduction. The polypeptide is Pseudo histidine-containing phosphotransfer protein 6 (AHP6) (Arabidopsis thaliana (Mouse-ear cress)).